The following is a 398-amino-acid chain: Tryptophan synthase beta chain (398 aa).

K89 is modified (N6-(pyridoxal phosphate)lysine).

Belongs to the TrpB family. Tetramer of two alpha and two beta chains. Pyridoxal 5'-phosphate serves as cofactor.

It catalyses the reaction (1S,2R)-1-C-(indol-3-yl)glycerol 3-phosphate + L-serine = D-glyceraldehyde 3-phosphate + L-tryptophan + H2O. Its pathway is amino-acid biosynthesis; L-tryptophan biosynthesis; L-tryptophan from chorismate: step 5/5. Functionally, the beta subunit is responsible for the synthesis of L-tryptophan from indole and L-serine. This Methanopyrus kandleri (strain AV19 / DSM 6324 / JCM 9639 / NBRC 100938) protein is Tryptophan synthase beta chain.